A 2201-amino-acid chain; its full sequence is Genome polyprotein (2201 aa).

A lipid anchor (N-myristoyl glycine; by host) is attached at Gly-2. Over 2-1511 (GAQVSTQKTG…YVSRAFICLQ (1510 aa)) the chain is Cytoplasmic. The interval 566-582 (KLQGDVEEAIERARCTV) is amphipathic alpha-helix. The Cell attachment site signature appears at 858–860 (RGD). Residues His-888 and Asp-906 each act as for protease 2A activity in the active site. The Zn(2+) site is built by Cys-923 and Cys-925. Cys-977 acts as the For protease 2A activity in catalysis. Zn(2+) is bound by residues Cys-983 and His-985. The membrane-binding stretch occupies residues 1117 to 1189 (NDSWLKKFTE…EQSAPSQSDQ (73 aa)). Residues 1117 to 1255 (NDSWLKKFTE…SPGAGKSVAT (139 aa)) form an oligomerization region. The RNA-binding stretch occupies residues 1138–1142 (AIKIQ). The SF3 helicase domain occupies 1221-1377 (EKKMSNYIQF…SMYSQNGKIN (157 aa)). Residues Cys-1385, Cys-1397, and Cys-1402 each coordinate Zn(2+). The C4-type; degenerate zinc-finger motif lies at 1385-1402 (CDEECCPVNFKKCCPLVC). Positions 1429 to 1436 (EYNHRHSV) are RNA-binding. The segment at 1440-1445 (LEALFQ) is oligomerization. An intramembrane segment occupies 1512-1527 (AITTFVSVAGIIYIIY). Topologically, residues 1528-2201 (KLFAGFQGAY…TLRRKWLDSF (674 aa)) are cytoplasmic. An O-(5'-phospho-RNA)-tyrosine modification is found at Tyr-1537. Positions 1557-1735 (GPAFEFAVAM…FSAALLKHYF (179 aa)) constitute a Peptidase C3 domain. Active-site for protease 3C activity residues include His-1596, Glu-1627, and Cys-1703. In terms of domain architecture, RdRp catalytic spans 1966–2082 (GHLIAFDYSG…SYPWPIDASL (117 aa)). The Mg(2+) site is built by Asp-1972 and Asp-2068.

The protein belongs to the picornaviruses polyprotein family. As to quaternary structure, interacts with capsid protein VP1 and capsid protein VP3 to form heterotrimeric protomers. In terms of assembly, interacts with capsid protein VP0, and capsid protein VP3 to form heterotrimeric protomers. Five protomers subsequently associate to form pentamers which serve as building blocks for the capsid. Interacts with capsid protein VP2, capsid protein VP3 and capsid protein VP4 following cleavage of capsid protein VP0. Interacts with host integrin heterodimer ITGAV/ITGB6. Interacts with capsid protein VP1 and capsid protein VP3 in the mature capsid. As to quaternary structure, interacts with capsid protein VP0 and capsid protein VP1 to form heterotrimeric protomers. Five protomers subsequently associate to form pentamers which serve as building blocks for the capsid. Interacts with capsid protein VP4 in the mature capsid. Interacts with protein 2C; this interaction may be important for virion morphogenesis. In terms of assembly, interacts with capsid protein VP1 and capsid protein VP3. Homodimer. As to quaternary structure, homohexamer; forms a hexameric ring structure with 6-fold symmetry characteristic of AAA+ ATPases. Interacts (via N-terminus) with host RTN3 (via reticulon domain); this interaction is important for viral replication. Interacts with capsid protein VP3; this interaction may be important for virion morphogenesis. In terms of assembly, interacts with protein 3CD. Homodimer. Interacts with host GBF1. Interacts (via GOLD domain) with host ACBD3 (via GOLD domain); this interaction allows the formation of a viral protein 3A/ACBD3 heterotetramer with a 2:2 stoichiometry, which will stimulate the recruitment of host PI4KB in order to synthesize PI4P at the viral RNA replication sites. As to quaternary structure, interacts with RNA-directed RNA polymerase. In terms of assembly, interacts with protein 3AB and with RNA-directed RNA polymerase. Interacts with Viral protein genome-linked and with protein 3CD. Mg(2+) serves as cofactor. In terms of processing, specific enzymatic cleavages in vivo by the viral proteases yield processing intermediates and the mature proteins. Myristoylation is required for the formation of pentamers during virus assembly. Further assembly of 12 pentamers and a molecule of genomic RNA generates the provirion. Post-translationally, during virion maturation, immature virions are rendered infectious following cleavage of VP0 into VP4 and VP2. This maturation seems to be an autocatalytic event triggered by the presence of RNA in the capsid and it is followed by a conformational change infectious virion. In terms of processing, myristoylation is required during RNA encapsidation and formation of the mature virus particle. VPg is uridylylated by the polymerase into VPg-pUpU. This acts as a nucleotide-peptide primer for the genomic RNA replication.

It is found in the virion. The protein localises to the host cytoplasm. It localises to the host cytoplasmic vesicle membrane. The protein resides in the host nucleus. It carries out the reaction a ribonucleoside 5'-triphosphate + H2O = a ribonucleoside 5'-diphosphate + phosphate + H(+). It catalyses the reaction Selective cleavage of Tyr-|-Gly bond in the picornavirus polyprotein.. The catalysed reaction is RNA(n) + a ribonucleoside 5'-triphosphate = RNA(n+1) + diphosphate. The enzyme catalyses Selective cleavage of Gln-|-Gly bond in the poliovirus polyprotein. In other picornavirus reactions Glu may be substituted for Gln, and Ser or Thr for Gly.. Replication or transcription is subject to high level of random mutations by the nucleotide analog ribavirin. Functionally, forms an icosahedral capsid of pseudo T=3 symmetry with capsid proteins VP2 and VP3. The capsid is 300 Angstroms in diameter, composed of 60 copies of each capsid protein and enclosing the viral positive strand RNA genome. Capsid protein VP1 mainly forms the vertices of the capsid. Capsid protein VP1 interacts with host integrin ITGAV/ITGB6 to provide virion attachment to target host cells. This attachment induces virion internalization. Tyrosine kinases are probably involved in the entry process. After binding to its receptor, the capsid undergoes conformational changes. Capsid protein VP1 N-terminus (that contains an amphipathic alpha-helix) and capsid protein VP4 are externalized. Together, they shape a pore in the host membrane through which viral genome is translocated to host cell cytoplasm. Its function is as follows. Forms an icosahedral capsid of pseudo T=3 symmetry with capsid proteins VP2 and VP3. The capsid is 300 Angstroms in diameter, composed of 60 copies of each capsid protein and enclosing the viral positive strand RNA genome. Lies on the inner surface of the capsid shell. After binding to the host receptor, the capsid undergoes conformational changes. Capsid protein VP4 is released, Capsid protein VP1 N-terminus is externalized, and together, they shape a pore in the host membrane through which the viral genome is translocated into the host cell cytoplasm. In terms of biological role, component of immature procapsids, which is cleaved into capsid proteins VP4 and VP2 after maturation. Allows the capsid to remain inactive before the maturation step. Functionally, cysteine protease that cleaves viral polyprotein and specific host proteins. It is responsible for the autocatalytic cleavage between the P1 and P2 regions, which is the first cleavage occurring in the polyprotein. Also cleaves the host translation initiation factor EIF4G1, in order to shut down the capped cellular mRNA translation. Inhibits the host nucleus-cytoplasm protein and RNA trafficking by cleaving host members of the nuclear pores. Counteracts stress granule formation probably by antagonizing its assembly or promoting its dissassembly. Cleaves and inhibits host IFIH1/MDA5, thereby inhibiting the type-I IFN production and the establishment of the antiviral state. Cleaves and inhibits host MAVS, thereby inhibiting the type-I IFN production and the establishment of the antiviral state. Its function is as follows. Plays an essential role in the virus replication cycle by acting as a viroporin. Creates a pore in the host endoplasmic reticulum and as a consequence releases Ca2+ in the cytoplasm of infected cell. In turn, high levels of cytoplasmic calcium may trigger membrane trafficking and transport of viral ER-associated proteins to viroplasms, sites of viral genome replication. Induces and associates with structural rearrangements of intracellular membranes. Displays RNA-binding, nucleotide binding and NTPase activities. May play a role in virion morphogenesis and viral RNA encapsidation by interacting with the capsid protein VP3. In terms of biological role, localizes the viral replication complex to the surface of membranous vesicles. Together with protein 3CD binds the Cis-Active RNA Element (CRE) which is involved in RNA synthesis initiation. Acts as a cofactor to stimulate the activity of 3D polymerase, maybe through a nucleid acid chaperone activity. Functionally, localizes the viral replication complex to the surface of membranous vesicles. It inhibits host cell endoplasmic reticulum-to-Golgi apparatus transport and causes the disassembly of the Golgi complex, possibly through GBF1 interaction. This would result in depletion of MHC, trail receptors and IFN receptors at the host cell surface. Plays an essential role in viral RNA replication by recruiting ACBD3 and PI4KB at the viral replication sites, thereby allowing the formation of the rearranged membranous structures where viral replication takes place. Its function is as follows. Acts as a primer for viral RNA replication and remains covalently bound to viral genomic RNA. VPg is uridylylated prior to priming replication into VPg-pUpU. The oriI viral genomic sequence may act as a template for this. The VPg-pUpU is then used as primer on the genomic RNA poly(A) by the RNA-dependent RNA polymerase to replicate the viral genome. During genome replication, the VPg-RNA linkage is removed by the host TDP2, thereby accelerating replication. During the late stage of the replication cycle, host TDP2 is excluded from sites of viral RNA synthesis and encapsidation, allowing for the generation of progeny virions. Involved in the viral replication complex and viral polypeptide maturation. It exhibits protease activity with a specificity and catalytic efficiency that is different from protease 3C. Protein 3CD lacks polymerase activity. Protein 3CD binds to the 5'UTR of the viral genome. In terms of biological role, replicates the viral genomic RNA on the surface of intracellular membranes. May form linear arrays of subunits that propagate along a strong head-to-tail interaction called interface-I. Covalently attaches UMP to a tyrosine of VPg, which is used to prime RNA synthesis. The positive stranded RNA genome is first replicated at virus induced membranous vesicles, creating a dsRNA genomic replication form. This dsRNA is then used as template to synthesize positive stranded RNA genomes. ss(+)RNA genomes are either translated, replicated or encapsidated. Functionally, major viral protease that mediates proteolytic processing of the polyprotein. Cleaves host EIF5B, contributing to host translation shutoff. Also cleaves host PABPC1, contributing to host translation shutoff. Cleaves host NLRP1, triggers host N-glycine-mediated degradation of the autoinhibitory NLRP1 N-terminal fragment. This chain is Genome polyprotein, found in Coxsackievirus A9 (strain Griggs).